Reading from the N-terminus, the 151-residue chain is Ribonuclease H (151 aa).

An RNase H type-1 domain is found at 2-143; the sequence is SSNVIEIYAD…ADALANKGVD (142 aa). Mg(2+) is bound by residues Asp-11, Glu-49, Asp-71, and Asp-135.

The protein belongs to the RNase H family. In terms of assembly, monomer. Requires Mg(2+) as cofactor.

It is found in the cytoplasm. The enzyme catalyses Endonucleolytic cleavage to 5'-phosphomonoester.. Functionally, endonuclease that specifically degrades the RNA of RNA-DNA hybrids. This is Ribonuclease H from Methylobacillus flagellatus (strain ATCC 51484 / DSM 6875 / VKM B-1610 / KT).